Reading from the N-terminus, the 175-residue chain is Alpha-crystallin B chain (175 aa).

N-acetylmethionine is present on methionine 1. Serine 19 carries the post-translational modification Phosphoserine. A glycan (O-linked (GlcNAc) serine) is linked at serine 41. Serine 45 and serine 59 each carry phosphoserine. The sHSP domain maps to 56 to 164 (RAPSWIDTGL…PERTIPITRE (109 aa)). Residue histidine 83 coordinates Zn(2+). N-linked (Glc) (glycation) lysine glycosylation occurs at lysine 90. Lysine 92 carries the N6-acetyllysine; alternate modification. The N-linked (Glc) (glycation) lysine; alternate glycan is linked to lysine 92. Zn(2+) contacts are provided by histidine 104, glutamate 106, histidine 111, and histidine 119. The disordered stretch occupies residues 144–175 (TVNGPRKQASGPERTIPITREEKPAVTAAPKK). Lysine 166 bears the N6-acetyllysine mark. O-linked (GlcNAc) threonine glycosylation occurs at threonine 170.

The protein belongs to the small heat shock protein (HSP20) family. Heteromer composed of three CRYAA and one CRYAB subunits. Aggregates with homologous proteins, including the small heat shock protein HSPB1, to form large heteromeric complexes. Inter-subunit bridging via zinc ions enhances stability, which is crucial as there is no protein turn over in the lens. Interacts with HSPBAP1 and TTN/titin. Interacts with TMEM109; in the cellular response to DNA damage. Interacts with DES; binds rapidly during early stages of DES filament assembly and a reduced binding seen in the later stages. Interacts with TMED10; the interaction mediates the translocation from the cytoplasm into the ERGIC (endoplasmic reticulum-Golgi intermediate compartment) and thereby secretion. Interacts with ATP6V1A and with MTOR, forming a ternary complex. Post-translationally, it is not known whether either Lys-90, or Lys-92, or both are glycated. In terms of tissue distribution, lens as well as other tissues.

Its subcellular location is the cytoplasm. The protein localises to the nucleus. The protein resides in the secreted. It localises to the lysosome. In terms of biological role, may contribute to the transparency and refractive index of the lens. Has chaperone-like activity, preventing aggregation of various proteins under a wide range of stress conditions. In lens epithelial cells, stabilizes the ATP6V1A protein, preventing its degradation by the proteasome. This is Alpha-crystallin B chain (CRYAB) from Bos taurus (Bovine).